Consider the following 181-residue polypeptide: Adenine phosphoribosyltransferase (181 aa).

This sequence belongs to the purine/pyrimidine phosphoribosyltransferase family. As to quaternary structure, homodimer.

It is found in the cytoplasm. It carries out the reaction AMP + diphosphate = 5-phospho-alpha-D-ribose 1-diphosphate + adenine. Its pathway is purine metabolism; AMP biosynthesis via salvage pathway; AMP from adenine: step 1/1. In terms of biological role, catalyzes a salvage reaction resulting in the formation of AMP, that is energically less costly than de novo synthesis. The polypeptide is Adenine phosphoribosyltransferase (Cytophaga hutchinsonii (strain ATCC 33406 / DSM 1761 / CIP 103989 / NBRC 15051 / NCIMB 9469 / D465)).